The sequence spans 458 residues: Hyaluronidase conohyal-P1 (458 aa).

The signal sequence occupies residues 1–18; the sequence is MRVVVVVTGLVVVVVATA. Residues 24–47 are disordered; that stretch reads HDVKSASSPLSSSSVYQGSSGDDC. Over residues 28-43 the composition is skewed to low complexity; the sequence is SASSPLSSSSVYQGSS. Cys68 and Cys342 are joined by a disulfide. 2 N-linked (GlcNAc...) asparagine glycosylation sites follow: Asn106 and Asn141. The active-site Proton donor is the Glu151. 3 N-linked (GlcNAc...) asparagine glycosylation sites follow: Asn261, Asn337, and Asn359. Residues 363–434 form the EGF-like domain; the sequence is VMADCSTTLC…VRPSRCHKQQ (72 aa). 3 disulfide bridges follow: Cys367–Cys378, Cys372–Cys411, and Cys413–Cys422.

The protein belongs to the glycosyl hydrolase 56 family. As to expression, expressed by the venom duct.

It is found in the secreted. It carries out the reaction Random hydrolysis of (1-&gt;4)-linkages between N-acetyl-beta-D-glucosamine and D-glucuronate residues in hyaluronate.. In terms of biological role, hyaluronidase catalyzes the hydrolysis of hyaluronic acid (HA), an anionic, nonsulfated glycosaminoglycan distributed widely throughout connective, epithelial, and neural tissues. In venom, they are known to enhance diffusion of the venom by degrading the extracellular matrix. The sequence is that of Hyaluronidase conohyal-P1 from Conus purpurascens (Purple cone).